The chain runs to 441 residues: MKLWGGRFKSETDKLMEEFNSSISFDIRLLKHDILGSIAHAKGLYKAGVLTEDELNLIEKGLKEILDETNVGEIPNDEDVHSYVERLLTEKIGDVGRKLHTGRSRNDQVATDERLYLRDEIDKIKEDLIKLIDTLKEMAETYKKAIMPGYTHLQRAQPVTFGHHLLAYVEMFKRDLSRLEDMYKRVNVMPLGSGALAGTTFDIDRKYVASLLGFDDITLNSMDGVSDRDFVIEFLSFASITMMHLSRFCEELILWSTKEFDFIEMDDRFSTGSSMMPQKKNPDAAELIRGKTGRVYGDLITILTVMKGLSLAYNKDMQEDKEALFDGIDTLKMSLKVFTEMIKTIKVKTDNMEKAAKYGYMNATDFADYLVSKGIPFRTAHEIAGKVVLYAIERNLAIEDLPLNELKKFSDVIDEDVYEAIDLKNTLKKKKTIGAPTSIQS.

Belongs to the lyase 1 family. Argininosuccinate lyase subfamily.

It localises to the cytoplasm. The enzyme catalyses 2-(N(omega)-L-arginino)succinate = fumarate + L-arginine. It participates in amino-acid biosynthesis; L-arginine biosynthesis; L-arginine from L-ornithine and carbamoyl phosphate: step 3/3. The protein is Argininosuccinate lyase of Thermoanaerobacter pseudethanolicus (strain ATCC 33223 / 39E) (Clostridium thermohydrosulfuricum).